Consider the following 523-residue polypeptide: Sugar carrier protein C (523 aa).

Topologically, residues 1-25 are cytoplasmic; sequence MPAVGGIPPSGGNRKVYPGNLTLYV. Transmembrane regions (helical) follow at residues 26 to 46, 86 to 106, 120 to 140, 143 to 163, 172 to 192, 205 to 225, 298 to 320, 327 to 347, 351 to 371, 387 to 407, 433 to 453, and 456 to 476; these read TVTC…IGIS, MFTS…STIT, VLFC…MLIL, ILLG…LSEM, LNIG…VLNY, LSLG…LVLP, LTGI…FGSD, VITG…VDKW, FLFL…AACI, WYAV…AWSW, SVNM…LCHL, and GLFI…YYFL. Residues 477 to 523 lie on the Cytoplasmic side of the membrane; it reads PETKGIPIEEMGQVWKQHWYWSRYVVDEDYPNGGLEMGKEGRIPKNV.

Belongs to the major facilitator superfamily. Sugar transporter (TC 2.A.1.1) family.

The protein resides in the membrane. This is Sugar carrier protein C (STC) from Ricinus communis (Castor bean).